We begin with the raw amino-acid sequence, 301 residues long: Sulfate adenylyltransferase subunit 2 (301 aa).

Positions 279-301 are disordered; that stretch reads RQGRLIDRDEAGSMEKKKREGYF.

Belongs to the PAPS reductase family. CysD subfamily. Sulfate-activating enzymes, NodP and NodQ, may be physically associated.

The enzyme catalyses sulfate + ATP + H(+) = adenosine 5'-phosphosulfate + diphosphate. Proposed to provide activated sulfate for transfer to nod factor. The sequence is that of Sulfate adenylyltransferase subunit 2 (nodP) from Rhizobium sp. (strain N33).